The chain runs to 216 residues: ATP-dependent Clp protease proteolytic subunit (216 aa).

The Nucleophile role is filled by S101. H126 is an active-site residue.

Belongs to the peptidase S14 family. In terms of assembly, component of the chloroplastic Clp protease core complex.

It is found in the plastid. The protein resides in the chloroplast stroma. The enzyme catalyses Hydrolysis of proteins to small peptides in the presence of ATP and magnesium. alpha-casein is the usual test substrate. In the absence of ATP, only oligopeptides shorter than five residues are hydrolyzed (such as succinyl-Leu-Tyr-|-NHMec, and Leu-Tyr-Leu-|-Tyr-Trp, in which cleavage of the -Tyr-|-Leu- and -Tyr-|-Trp bonds also occurs).. In terms of biological role, cleaves peptides in various proteins in a process that requires ATP hydrolysis. Has a chymotrypsin-like activity. Plays a major role in the degradation of misfolded proteins. The chain is ATP-dependent Clp protease proteolytic subunit from Oryza nivara (Indian wild rice).